The following is a 535-amino-acid chain: Sucrose transport protein SUT5 (535 aa).

Topologically, residues 1-53 (MEEGRRGDREAKSAAGWTALSTTKTTLEEKRRLQANGSVGGDAGTSGFRRIVR) are cytoplasmic. The helical transmembrane segment at 54–74 (LFFACMVAGGIQYGWALQLSL) threads the bilayer. Topologically, residues 75 to 87 (LSPYSQTLGISHS) are extracellular. Residues 88 to 108 (YVSLTWICGPIAGFVVQPIVG) traverse the membrane as a helical segment. Over 109–122 (YYSDRCTMKMGRRR) the chain is Cytoplasmic. Residues 123-143 (PFILVGCLIICISVMIIGFSA) traverse the membrane as a helical segment. Over 144 to 163 (DIGRHLGDTKEHCSTYTGPR) the chain is Extracellular. A helical membrane pass occupies residues 164-184 (WSAAMVYIVGFWFLDFANNTV). The Cytoplasmic portion of the chain corresponds to 185 to 203 (QGPARAMMADLSAGHHGPN). The helical transmembrane segment at 204 to 224 (VGQSIFSLWMAIGSVLGYLSG) threads the bilayer. The Extracellular segment spans residues 225–249 (ANGKWHEWFPWLKTAACCDACANLK). Residues 250–270 (GAFFTAVLLIVVSMTVTMYLA) traverse the membrane as a helical segment. Residues 271 to 302 (DEMPLDKQDVDTSGGGGCAVFVDLFKSLRNLP) lie on the Cytoplasmic side of the membrane. The chain crosses the membrane as a helical span at residues 303–323 (PAMFKVLAVTAVTWLSWFPFI). The Extracellular segment spans residues 324 to 354 (QYNTDWMGREIYHGEPQGTAAKADVYDAGVR). Residues 355-375 (EGAMGLLFCSVALGVTSFVIP) traverse the membrane as a helical segment. Over 376 to 384 (KLCRRLTSK) the chain is Cytoplasmic. A helical transmembrane segment spans residues 385 to 405 (VVWSISNFLVFALMAVMVAVG). Topologically, residues 406 to 429 (MVSMRGYRPSLAAGLTGPDPTLKA) are extracellular. A helical membrane pass occupies residues 430–450 (VALVVFALIGIPQAVLFSVPW). Residues 451-465 (AVASEVTAEEGGGQG) are Cytoplasmic-facing. The helical transmembrane segment at 466-486 (LAIGVLNIAIVVPQLVIALTA) threads the bilayer. The Extracellular segment spans residues 487–498 (GPIDGAFNKGNT). Residues 499 to 519 (PAFGIGGAFAFICGVLALIWL) form a helical membrane-spanning segment. The Cytoplasmic portion of the chain corresponds to 520-535 (PKTRGVSNAAVVAGGH).

Belongs to the glycoside-pentoside-hexuronide (GPH) cation symporter transporter (TC 2.A.2.4) family. In terms of assembly, homodimer.

The protein resides in the cell membrane. It functions in the pathway glycan biosynthesis; sucrose metabolism. In terms of biological role, responsible for the transport of sucrose into the cell, with the concomitant uptake of protons (symport system). May also transport other glucosides. In Oryza sativa subsp. indica (Rice), this protein is Sucrose transport protein SUT5 (SUT5).